The sequence spans 357 residues: uncharacterized protein (357 aa).

Residues 120-145 (SSSTVNHDQPAEQPSDKSTDDSTGYP) are disordered.

This is an uncharacterized protein from Caenorhabditis elegans.